We begin with the raw amino-acid sequence, 383 residues long: Mannitol-1-phosphate 5-dehydrogenase (383 aa).

3 to 14 (ALHFGAGNIGRG) lines the NAD(+) pocket.

Belongs to the mannitol dehydrogenase family.

It catalyses the reaction D-mannitol 1-phosphate + NAD(+) = beta-D-fructose 6-phosphate + NADH + H(+). The chain is Mannitol-1-phosphate 5-dehydrogenase from Serratia proteamaculans (strain 568).